Reading from the N-terminus, the 466-residue chain is Keratin, type II cytoskeletal 7 (466 aa).

Ser-2 bears the N-acetylserine mark. Phosphoserine is present on residues Ser-2 and Ser-7. Residues 2–91 (SLHFGSQVFS…DPSIQQVRQE (90 aa)) form a head region. The O-linked (GlcNAc) serine glycan is linked to Ser-12. Position 20 is a dimethylated arginine; alternate (Arg-20). Arg-20 is modified (omega-N-methylarginine; alternate). Phosphoserine is present on residues Ser-54, Ser-72, and Ser-84. The segment at 91 to 127 (EEREQIKTLNNKFASFIDKVRFLEQQNKLLETKWALL) is coil 1A. Residues 92-404 (EREQIKTLNN…KLLEGEESRL (313 aa)) enclose the IF rod domain. Thr-98 is subject to Phosphothreonine. The segment at 128 to 145 (QEQKSAKSNRLPGIFEAQ) is linker 1. A Glycyl lysine isopeptide (Lys-Gly) (interchain with G-Cter in SUMO2) cross-link involves residue Lys-131. The tract at residues 146-237 (IAGLRKQLEA…TLYEQELKEL (92 aa)) is coil 1B. Lys-180 bears the N6-acetyllysine mark. The linker 12 stretch occupies residues 238–261 (QSEVSDTSVVLSMDNNRSLDLDSI). Ser-255 is subject to Phosphoserine. The interval 262-400 (IAEVKAQYEE…ATYRKLLEGE (139 aa)) is coil 2. Glycyl lysine isopeptide (Lys-Gly) (interchain with G-Cter in SUMO2) cross-links involve residues Lys-266 and Lys-287. Thr-290 is subject to Phosphothreonine. Glycyl lysine isopeptide (Lys-Gly) (interchain with G-Cter in SUMO2) cross-links involve residues Lys-297 and Lys-332. The interval 401–466 (ESRLTGDGVG…TSATSRSPRK (66 aa)) is tail.

Belongs to the intermediate filament family. Heterotetramer of two type I and two type II keratins. Interacts with eukaryotic translation initiator factor 3 (eIF3) subunit EIF3S10. Interacts with GPER1. Post-translationally, arg-20 is dimethylated, probably to asymmetric dimethylarginine.

Functionally, blocks interferon-dependent interphase and stimulates DNA synthesis in cells. The protein is Keratin, type II cytoskeletal 7 of Bos taurus (Bovine).